The following is a 281-amino-acid chain: Energy-coupling factor transporter ATP-binding protein EcfA1 (281 aa).

The ABC transporter domain occupies 6–242 (IDVKHLDYRY…GEALIKMGLD (237 aa)). 42–49 (GHNGSGKS) contributes to the ATP binding site.

Belongs to the ABC transporter superfamily. Energy-coupling factor EcfA family. In terms of assembly, forms a stable energy-coupling factor (ECF) transporter complex composed of 2 membrane-embedded substrate-binding proteins (S component), 2 ATP-binding proteins (A component) and 2 transmembrane proteins (T component).

The protein localises to the cell membrane. In terms of biological role, ATP-binding (A) component of a common energy-coupling factor (ECF) ABC-transporter complex. Unlike classic ABC transporters this ECF transporter provides the energy necessary to transport a number of different substrates. This Lactiplantibacillus plantarum (strain ATCC BAA-793 / NCIMB 8826 / WCFS1) (Lactobacillus plantarum) protein is Energy-coupling factor transporter ATP-binding protein EcfA1.